The chain runs to 354 residues: MIRSSVDRIMLHVCLALLPTTAWGLYLFGWPAIYLWLLTCASAVACEAACLYLLGRPLRRLLDGSALLSGWLLALTLPPWAPWWIAVGGSMFAIGIGKQLYGGVGQNVFNPAMLARVALLIAFPLQMTTWALPLPLGTEGAPGWLEGLRITFAGGALADGLSGATALGHLQTELTLGHSAAQILDGHFALLPAFLGYSGGSLGETSELLILLGGLWLLALRIIHWEIPLGMLLTVGALAALANQIDPQVHGGGLFHLTSGGLLLGALFIATDPVTSPISRSGRLIFAIGCGALVFVIRSWGNFPEAVAFAVLLMNALVPLIDRVCRPRAYGRNARGKPLVAAKWTRQVKEVDKV.

Helical transmembrane passes span 9-28, 67-87, and 117-137; these read IMLH…LYLF, LLSG…WIAV, and VALL…LPLG. Position 165 is an FMN phosphoryl threonine (Thr-165). Helical transmembrane passes span 200 to 220, 222 to 242, 249 to 269, 277 to 297, and 301 to 321; these read GSLG…LLAL, IIHW…AALA, VHGG…ALFI, PISR…VFVI, and GNFP…VPLI.

Belongs to the NqrB/RnfD family. As to quaternary structure, the complex is composed of six subunits: RnfA, RnfB, RnfC, RnfD, RnfE and RnfG. It depends on FMN as a cofactor.

The protein localises to the cell inner membrane. Functionally, part of a membrane-bound complex that couples electron transfer with translocation of ions across the membrane. The chain is Ion-translocating oxidoreductase complex subunit D from Stutzerimonas stutzeri (Pseudomonas stutzeri).